A 953-amino-acid chain; its full sequence is Coiled-coil domain-containing protein 14 (953 aa).

A compositionally biased stretch (basic residues) spans 1 to 21; the sequence is MKRGIRRDPFRKRKLGGRAKK. Disordered regions lie at residues 1–22 and 52–72; these read MKRG…AKKV and SGAR…AKLT. Residue S124 is modified to Phosphoserine. Disordered stretches follow at residues 126–189 and 268–287; these read SETA…TSDL and PPCP…SQFA. The span at 145 to 154 shows a compositional bias: basic residues; the sequence is YGSKKKRHEK. A compositionally biased stretch (basic and acidic residues) spans 169–187; the sequence is DNKKQIPNEASARSERDTS. The span at 277 to 287 shows a compositional bias: polar residues; it reads EVQTDGNSQFA. Coiled-coil stretches lie at residues 383–413 and 483–618; these read LATN…RDTK and AMQP…AEKE. Phosphoserine is present on residues S670, S754, and S798.

As to quaternary structure, interacts with CEP63.

The protein resides in the cytoplasm. The protein localises to the cytoskeleton. Its subcellular location is the microtubule organizing center. It localises to the centrosome. It is found in the centriolar satellite. Functionally, negatively regulates centriole duplication. Negatively regulates CEP63 and CDK2 centrosomal localization. This is Coiled-coil domain-containing protein 14 (CCDC14) from Homo sapiens (Human).